A 331-amino-acid polypeptide reads, in one-letter code: 6-phosphogluconolactonase (331 aa).

The protein belongs to the cycloisomerase 2 family.

It catalyses the reaction 6-phospho-D-glucono-1,5-lactone + H2O = 6-phospho-D-gluconate + H(+). The protein operates within carbohydrate degradation; pentose phosphate pathway; D-ribulose 5-phosphate from D-glucose 6-phosphate (oxidative stage): step 2/3. In terms of biological role, catalyzes the hydrolysis of 6-phosphogluconolactone to 6-phosphogluconate. This Sodalis glossinidius (strain morsitans) protein is 6-phosphogluconolactonase.